We begin with the raw amino-acid sequence, 372 residues long: Phenylalanine--tRNA ligase alpha subunit (372 aa).

Glu-276 is a Mg(2+) binding site.

This sequence belongs to the class-II aminoacyl-tRNA synthetase family. Phe-tRNA synthetase alpha subunit type 1 subfamily. Tetramer of two alpha and two beta subunits. Requires Mg(2+) as cofactor.

It localises to the cytoplasm. The catalysed reaction is tRNA(Phe) + L-phenylalanine + ATP = L-phenylalanyl-tRNA(Phe) + AMP + diphosphate + H(+). In Thermobifida fusca (strain YX), this protein is Phenylalanine--tRNA ligase alpha subunit.